A 182-amino-acid polypeptide reads, in one-letter code: MSLNRNDKAAVVAEVAAQVARSQTLALAEYRGLTVADLDKLRRTAREQGVYLHVLKNTLARRAVAGTAFESAAESMSGPLIYGFSEDAIAAAKVVVDFAKTNDKLVLKGGAYAGKALDVNGIKALASIPSKEVLLAQFLGLLQSPISRTARVLAALAEKRAVPAAEEAVEATADVATEAAAG.

This sequence belongs to the universal ribosomal protein uL10 family. As to quaternary structure, part of the ribosomal stalk of the 50S ribosomal subunit. The N-terminus interacts with L11 and the large rRNA to form the base of the stalk. The C-terminus forms an elongated spine to which L12 dimers bind in a sequential fashion forming a multimeric L10(L12)X complex.

Its function is as follows. Forms part of the ribosomal stalk, playing a central role in the interaction of the ribosome with GTP-bound translation factors. This is Large ribosomal subunit protein uL10 from Leptothrix cholodnii (strain ATCC 51168 / LMG 8142 / SP-6) (Leptothrix discophora (strain SP-6)).